A 580-amino-acid polypeptide reads, in one-letter code: Laccase-5 (580 aa).

Positions 1-25 (MDVTKSLLCFISFVAFLLFSSVAEA) are cleaved as a signal peptide. 2 consecutive Plastocyanin-like domains span residues 34 to 150 (IIQA…PPAG) and 160 to 312 (RNVP…YKSA). N-linked (GlcNAc...) asparagine glycosylation occurs at asparagine 80. Cu cation contacts are provided by histidine 84, histidine 86, histidine 129, and histidine 131. 7 N-linked (GlcNAc...) asparagine glycosylation sites follow: asparagine 189, asparagine 300, asparagine 340, asparagine 392, asparagine 402, asparagine 410, and asparagine 443. The Plastocyanin-like 3 domain maps to 428 to 564 (DFPAKPPVKF…AMAFLVENGN (137 aa)). Cu cation-binding residues include histidine 481, histidine 484, histidine 486, histidine 543, cysteine 544, histidine 545, and histidine 549.

This sequence belongs to the multicopper oxidase family. The cofactor is Cu cation. As to expression, ubiquitous and constitutive.

It localises to the secreted. The protein localises to the extracellular space. It is found in the apoplast. It carries out the reaction 4 hydroquinone + O2 = 4 benzosemiquinone + 2 H2O. Lignin degradation and detoxification of lignin-derived products. This Arabidopsis thaliana (Mouse-ear cress) protein is Laccase-5 (LAC5).